We begin with the raw amino-acid sequence, 147 residues long: Deoxyuridine 5'-triphosphate nucleotidohydrolase (147 aa).

Residues Ser69, Gly82, Asp85, Tyr88, Lys93, Arg137, Phe142, and Gly143 each contribute to the dUMP site.

Belongs to the dUTPase family. As to quaternary structure, homotrimer. Mg(2+) serves as cofactor.

It carries out the reaction dUTP + H2O = dUMP + diphosphate + H(+). Its pathway is pyrimidine metabolism; dUMP biosynthesis; dUMP from dCTP (dUTP route): step 2/2. Its function is as follows. Involved in nucleotide metabolism via production of dUMP, the immediate precursor of thymidine nucleotides, and decreases the intracellular concentration of dUTP so that uracil cannot be incorporated into DNA. Shows a significant activity against dITP, another potentially mutagenic nucleotide. The sequence is that of Deoxyuridine 5'-triphosphate nucleotidohydrolase from Saccharomyces cerevisiae (strain ATCC 204508 / S288c) (Baker's yeast).